We begin with the raw amino-acid sequence, 96 residues long: Co-chaperonin GroES (96 aa).

It belongs to the GroES chaperonin family. In terms of assembly, heptamer of 7 subunits arranged in a ring. Interacts with the chaperonin GroEL.

It is found in the cytoplasm. Its function is as follows. Together with the chaperonin GroEL, plays an essential role in assisting protein folding. The GroEL-GroES system forms a nano-cage that allows encapsulation of the non-native substrate proteins and provides a physical environment optimized to promote and accelerate protein folding. GroES binds to the apical surface of the GroEL ring, thereby capping the opening of the GroEL channel. The protein is Co-chaperonin GroES of Shewanella oneidensis (strain ATCC 700550 / JCM 31522 / CIP 106686 / LMG 19005 / NCIMB 14063 / MR-1).